A 107-amino-acid chain; its full sequence is uncharacterized protein (107 aa).

3 helical membrane passes run 16–36 (VIPCTLSSPSFVLMAVISESL), 47–67 (IISLIESAVTSLSYVTWHSLV), and 85–105 (LIVLVQALHVIPCTASITSLI).

The protein localises to the membrane. This is an uncharacterized protein from Saccharomyces cerevisiae (strain ATCC 204508 / S288c) (Baker's yeast).